Consider the following 131-residue polypeptide: Phosphoribosyl-AMP cyclohydrolase (131 aa).

Asp-82 contributes to the Mg(2+) binding site. Residue Cys-83 participates in Zn(2+) binding. Mg(2+) is bound by residues Asp-84 and Asp-86. Residues Cys-99 and Cys-106 each coordinate Zn(2+).

Belongs to the PRA-CH family. In terms of assembly, homodimer. Mg(2+) is required as a cofactor. Zn(2+) serves as cofactor.

The protein resides in the cytoplasm. The catalysed reaction is 1-(5-phospho-beta-D-ribosyl)-5'-AMP + H2O = 1-(5-phospho-beta-D-ribosyl)-5-[(5-phospho-beta-D-ribosylamino)methylideneamino]imidazole-4-carboxamide. The protein operates within amino-acid biosynthesis; L-histidine biosynthesis; L-histidine from 5-phospho-alpha-D-ribose 1-diphosphate: step 3/9. Functionally, catalyzes the hydrolysis of the adenine ring of phosphoribosyl-AMP. The chain is Phosphoribosyl-AMP cyclohydrolase from Methanospirillum hungatei JF-1 (strain ATCC 27890 / DSM 864 / NBRC 100397 / JF-1).